A 326-amino-acid chain; its full sequence is Lipoyl synthase (326 aa).

Residues Cys-74, Cys-79, Cys-85, Cys-100, Cys-104, Cys-107, and Ser-314 each coordinate [4Fe-4S] cluster. Positions 85–303 (CFGKGTATFM…EEEAYKMGFT (219 aa)) constitute a Radical SAM core domain.

Belongs to the radical SAM superfamily. Lipoyl synthase family. [4Fe-4S] cluster is required as a cofactor.

The protein resides in the cytoplasm. It carries out the reaction [[Fe-S] cluster scaffold protein carrying a second [4Fe-4S](2+) cluster] + N(6)-octanoyl-L-lysyl-[protein] + 2 oxidized [2Fe-2S]-[ferredoxin] + 2 S-adenosyl-L-methionine + 4 H(+) = [[Fe-S] cluster scaffold protein] + N(6)-[(R)-dihydrolipoyl]-L-lysyl-[protein] + 4 Fe(3+) + 2 hydrogen sulfide + 2 5'-deoxyadenosine + 2 L-methionine + 2 reduced [2Fe-2S]-[ferredoxin]. Its pathway is protein modification; protein lipoylation via endogenous pathway; protein N(6)-(lipoyl)lysine from octanoyl-[acyl-carrier-protein]: step 2/2. Its function is as follows. Catalyzes the radical-mediated insertion of two sulfur atoms into the C-6 and C-8 positions of the octanoyl moiety bound to the lipoyl domains of lipoate-dependent enzymes, thereby converting the octanoylated domains into lipoylated derivatives. This is Lipoyl synthase from Delftia acidovorans (strain DSM 14801 / SPH-1).